Consider the following 274-residue polypeptide: Large ribosomal subunit protein uL2 (274 aa).

The disordered stretch occupies residues 223-274 (VAMNPVDHPHGGGEGRTSGGRHPVTPWGVPTKGYKTRSNKRTDKYIVRRRTK).

Belongs to the universal ribosomal protein uL2 family. Part of the 50S ribosomal subunit. Forms a bridge to the 30S subunit in the 70S ribosome.

Its function is as follows. One of the primary rRNA binding proteins. Required for association of the 30S and 50S subunits to form the 70S ribosome, for tRNA binding and peptide bond formation. It has been suggested to have peptidyltransferase activity; this is somewhat controversial. Makes several contacts with the 16S rRNA in the 70S ribosome. This is Large ribosomal subunit protein uL2 from Shewanella amazonensis (strain ATCC BAA-1098 / SB2B).